The sequence spans 234 residues: Ribonuclease HII (234 aa).

One can recognise an RNase H type-2 domain in the interval 16-207; it reads ALVAGVDEAG…VRRMLTPKAI (192 aa). Positions 22, 23, and 115 each coordinate a divalent metal cation.

The protein belongs to the RNase HII family. The cofactor is Mn(2+). Requires Mg(2+) as cofactor.

The protein localises to the cytoplasm. The catalysed reaction is Endonucleolytic cleavage to 5'-phosphomonoester.. Its function is as follows. Endonuclease that specifically degrades the RNA of RNA-DNA hybrids. The chain is Ribonuclease HII from Xylella fastidiosa (strain M23).